The following is a 404-amino-acid chain: Cysteine desulfurase IscS (404 aa).

Pyridoxal 5'-phosphate is bound by residues 75 to 76 (AT), Asn-155, Gln-183, and 203 to 205 (TSH). Position 206 is an N6-(pyridoxal phosphate)lysine (Lys-206). Thr-243 is a pyridoxal 5'-phosphate binding site. Cys-328 (cysteine persulfide intermediate) is an active-site residue. Cys-328 lines the [2Fe-2S] cluster pocket.

This sequence belongs to the class-V pyridoxal-phosphate-dependent aminotransferase family. NifS/IscS subfamily. Homodimer. Forms a heterotetramer with IscU, interacts with other sulfur acceptors. It depends on pyridoxal 5'-phosphate as a cofactor.

It is found in the cytoplasm. The enzyme catalyses (sulfur carrier)-H + L-cysteine = (sulfur carrier)-SH + L-alanine. It functions in the pathway cofactor biosynthesis; iron-sulfur cluster biosynthesis. In terms of biological role, master enzyme that delivers sulfur to a number of partners involved in Fe-S cluster assembly, tRNA modification or cofactor biosynthesis. Catalyzes the removal of elemental sulfur atoms from cysteine to produce alanine. Functions as a sulfur delivery protein for Fe-S cluster synthesis onto IscU, an Fe-S scaffold assembly protein, as well as other S acceptor proteins. The chain is Cysteine desulfurase IscS from Photobacterium profundum (strain SS9).